Reading from the N-terminus, the 605-residue chain is NADH-ubiquinone oxidoreductase chain 5 (605 aa).

The next 16 helical transmembrane spans lie at 11-31 (ILIT…LPPI), 49-69 (LSLT…ISSL), 77-97 (LAMS…ALFI), 120-140 (MFLL…NFFP), 141-161 (MLVG…WWHG), 178-198 (LADI…SSLD), 202-222 (FFAT…MAAM), 244-264 (VSAL…LIGM), 273-295 (GFSE…KALL), 302-322 (IIAF…GLNH), 325-345 (LAFM…LCAG), 371-391 (ASCF…TGFF), 408-425 (LWAT…IYSL), 457-477 (LALA…PIYT), 488-508 (LAAL…ISLA), and 584-604 (IKTY…IMLF).

Belongs to the complex I subunit 5 family.

It is found in the mitochondrion inner membrane. It catalyses the reaction a ubiquinone + NADH + 5 H(+)(in) = a ubiquinol + NAD(+) + 4 H(+)(out). Its function is as follows. Core subunit of the mitochondrial membrane respiratory chain NADH dehydrogenase (Complex I) that is believed to belong to the minimal assembly required for catalysis. Complex I functions in the transfer of electrons from NADH to the respiratory chain. The immediate electron acceptor for the enzyme is believed to be ubiquinone. The polypeptide is NADH-ubiquinone oxidoreductase chain 5 (MT-ND5) (Pelomedusa subrufa (African side-necked turtle)).